A 242-amino-acid chain; its full sequence is Peptidase E (242 aa).

Catalysis depends on charge relay system residues S123, D138, and H160.

It belongs to the peptidase S51 family.

It localises to the cytoplasm. The catalysed reaction is Dipeptidase E catalyzes the hydrolysis of dipeptides Asp-|-Xaa. It does not act on peptides with N-terminal Glu, Asn or Gln, nor does it cleave isoaspartyl peptides.. Hydrolyzes dipeptides containing N-terminal aspartate residues. May play a role in allowing the cell to use peptide aspartate to spare carbon otherwise required for the synthesis of the aspartate family of amino acids. The polypeptide is Peptidase E (Nostoc sp. (strain PCC 7120 / SAG 25.82 / UTEX 2576)).